The following is a 1042-amino-acid chain: MPGNVVSPKVLMDLIPKLKISMQETDKNEVIKNSEQHSSVSWDPDTCENLYITLEEQIESKDTLAREQALKALLLTLDATNKRVEPYLVRLLPRVLKQVGLEKVAAVRTQASTVAEDIIKTMNPYAVKTILSHVTNSIKTSGKWMEKMCAFRLLDMLVEKAPCQMSYRLPELIPILSESMWDTRTDIKNQARKTMTSVCTLISNPDIDKFIPVLIDCIAQPEKVPETIHTLGATTFVQEVHASTLSIMVPLLYRGLNERETTIKRKSAVIIDNMCKLVEDPYIIAPFLPKLIPTLEHIKETIGDPECRSVVNRSLATLIRVGNVKEGKIPEVLNIAKPENCMETLLSILKGQELVPVSDVYLNYISCIASQLIDEKNNEVVDWDVNISPYLQPIILKADINCIIDQFRKRSISGFHSSSAESEEEEGEDLCNCEFSLAYGAKILLNRTSLNLKRGYRYGLCGPNGSGKSTLLRSIFNGQLEGFPTELKTAYVEHDIDDTESKTSVFDFIANDPSVVVKNKQEVISSLLEHSFTEDMLSIPISNLSGGWKMKLALVRAMLRQVDILLLDEPTNHLDVKNVAWLENFLTSQTHITSIIVSHDSKFLDNVVQAIIHYEHFKLKKYMGNMSKFITLVPSARSYQDISMSEIEFSFPEPGYLEGVKTKQRAICRMRDIEFQYEGTSEPQIKNVSLQVSLSSRIAVIGPNGAGKSTLIKVLCGELIPQKGEVWCHPNLRIAYVAQAAFVHLGSHENKTPSEYIQWRYRTAEDSETIDRASRQLTENDEHLMNKIFKINGTSRKIQGIHSRRKLKNSYEYECSFLVGENVGEKNERWVPLPSMNNEWLPRGELIESHSKMVAEVDMKEALKSGSFRPLVRKEIEKHCESFGLDAEIVTHSRIKGLSGGQKVKLVLAAGSWLKPHVIVLDEPTNYLDRDSLGALSKALKSFEGGVVIITHSVEFTKNLTEEVWSVQNGQMTPSGHNWVQGQGTGPRLQEQEEEDTFDALGNKIEAKKKAKKLTSSELRKKKKERMARRKKGEEVFSDEDD.

6 HEAT repeats span residues 9–46, 86–124, 167–204, 206–242, 243–280, and 289–327; these read KVLMDLIPKLKISMQETDKNEVIKNSEQHSSVSWDPDT, PYLVRLLPRVLKQVGLEKVAAVRTQASTVAEDIIKTMNP, YRLPELIPILSESMWDTRTDIKNQARKTMTSVCTLISN, DIDKFIPVLIDCIAQPEKVPETIHTLGATTFVQEVHA, STLSIMVPLLYRGLNERETTIKRKSAVIIDNMCKLVED, and PKLIPTLEHIKETIGDPECRSVVNRSLATLIRVGNVKEG. 2 ABC transporter domains span residues 425–642 and 668–994; these read EEGE…YQDI and CRMR…EQEE. Residues Asn704, Glu923, Asn926, and His952 each contribute to the ADP site. Residues 1009–1042 form a disordered region; sequence KKAKKLTSSELRKKKKERMARRKKGEEVFSDEDD. Over residues 1020–1031 the composition is skewed to basic residues; it reads RKKKKERMARRK.

It belongs to the ABC transporter superfamily. ABCF family. EF3 subfamily. Monomer.

It localises to the cytoplasm. It carries out the reaction ATP + H2O = ADP + phosphate + H(+). It participates in protein biosynthesis; polypeptide chain elongation. Ribosome-dependent ATPase that functions in cytoplasmic translation elongation. Required for the ATP-dependent release of deacylated tRNA from the ribosomal E-site during protein biosynthesis. Stimulates the eEF1A-dependent binding of aminoacyl-tRNA to the ribosomal A-site, which has reduced affinity for tRNA as long as the E-site is occupied. Assists translation termination by stimulating the release of nascent protein from the ribosome by release factors. This chain is Elongation factor 3 (TEF3), found in Pneumocystis carinii.